The sequence spans 421 residues: Histidine--tRNA ligase (421 aa).

It belongs to the class-II aminoacyl-tRNA synthetase family. Homodimer.

Its subcellular location is the cytoplasm. The enzyme catalyses tRNA(His) + L-histidine + ATP = L-histidyl-tRNA(His) + AMP + diphosphate + H(+). The sequence is that of Histidine--tRNA ligase from Francisella tularensis subsp. novicida (strain U112).